The primary structure comprises 1345 residues: Aldehyde oxidase 2 (1345 aa).

The 2Fe-2S ferredoxin-type domain maps to 9 to 96; the sequence is DDLEFFVNGR…GAAVTTVEGV (88 aa). The [2Fe-2S] cluster site is built by Cys-48, Cys-53, Cys-56, and Cys-78. A Mo-molybdopterin-binding site is contributed by Gln-117. The [2Fe-2S] cluster site is built by Cys-118, Cys-121, Cys-153, and Cys-155. Cys-155 provides a ligand contact to Mo-molybdopterin. Positions 238 to 423 constitute an FAD-binding PCMH-type domain; the sequence is FYGERITWIA…GSVYIPHSQK (186 aa). Residues 266–273, Ala-347, Ser-356, His-360, Asp-369, and Leu-413 contribute to the FAD site; that span reads LISGNTAL. Mo-molybdopterin is bound by residues 812–813, 1094–1097, Gln-1209, and Leu-1274; these read GF and ASVG. The active-site Proton acceptor; for azaheterocycle hydroxylase activity is Glu-1276.

Belongs to the xanthine dehydrogenase family. Homodimer. It depends on [2Fe-2S] cluster as a cofactor. FAD is required as a cofactor. Mo-molybdopterin serves as cofactor. In terms of tissue distribution, expressed in olfactory mucosa epithelium (at protein level). Detected in skin.

It is found in the cytoplasm. The enzyme catalyses an aldehyde + O2 + H2O = a carboxylate + H2O2 + H(+). In terms of biological role, oxidase with broad substrate specificity, oxidizing aromatic azaheterocycles, such as phthalazine, as well as aldehydes, such as benzaldehyde and retinal. Cannot use hypoxanthine as substrate. This Mus musculus (Mouse) protein is Aldehyde oxidase 2 (Aox2).